We begin with the raw amino-acid sequence, 328 residues long: tRNA uridine(34) hydroxylase (328 aa).

A Rhodanese domain is found at 130–224 (LDKDTVVLDT…YGKDPEVQGE (95 aa)). The active-site Cysteine persulfide intermediate is the Cys-184.

It belongs to the TrhO family.

It catalyses the reaction uridine(34) in tRNA + AH2 + O2 = 5-hydroxyuridine(34) in tRNA + A + H2O. In terms of biological role, catalyzes oxygen-dependent 5-hydroxyuridine (ho5U) modification at position 34 in tRNAs. This chain is tRNA uridine(34) hydroxylase, found in Streptococcus pneumoniae (strain ATCC 700669 / Spain 23F-1).